Reading from the N-terminus, the 337-residue chain is DNA-directed RNA polymerase subunit alpha (337 aa).

The interval 1 to 233 (MIQKNWQELI…DQLSIFVNFE (233 aa)) is alpha N-terminal domain (alpha-NTD). The tract at residues 249-337 (FNPALLKKVD…DLAKRYEDQY (89 aa)) is alpha C-terminal domain (alpha-CTD).

Belongs to the RNA polymerase alpha chain family. Homodimer. The RNAP catalytic core consists of 2 alpha, 1 beta, 1 beta' and 1 omega subunit. When a sigma factor is associated with the core the holoenzyme is formed, which can initiate transcription.

The catalysed reaction is RNA(n) + a ribonucleoside 5'-triphosphate = RNA(n+1) + diphosphate. Its function is as follows. DNA-dependent RNA polymerase catalyzes the transcription of DNA into RNA using the four ribonucleoside triphosphates as substrates. The sequence is that of DNA-directed RNA polymerase subunit alpha from Brucella abortus (strain S19).